Consider the following 164-residue polypeptide: C-type lectin 1 (164 aa).

An N-terminal signal peptide occupies residues methionine 1 to alanine 23. 3 disulfides stabilise this stretch: cysteine 27-cysteine 38, cysteine 55-cysteine 154, and cysteine 129-cysteine 146. Positions tyrosine 34–glutamine 155 constitute a C-type lectin domain. Asparagine 35 and asparagine 109 each carry an N-linked (GlcNAc...) asparagine glycan. The short motif at glutamate 119–asparagine 121 is the Mannose-binding element. Positions 127, 142, and 143 each coordinate Ca(2+).

Belongs to the true venom lectin family. As to expression, expressed by the venom gland.

The protein localises to the secreted. Functionally, mannose-binding lectin which recognizes specific carbohydrate structures and agglutinates a variety of animal cells by binding to cell-surface glycoproteins and glycolipids. May be a calcium-dependent lectin. The sequence is that of C-type lectin 1 from Hydrophis hardwickii (Hardwick's spine-bellied seasnake).